Consider the following 426-residue polypeptide: Histidinol dehydrogenase (426 aa).

3 residues coordinate NAD(+): Y123, Q185, and N208. S231, Q253, and H256 together coordinate substrate. Positions 253 and 256 each coordinate Zn(2+). Residues E321 and H322 each act as proton acceptor in the active site. Residues H322, D355, E409, and H414 each contribute to the substrate site. Residue D355 coordinates Zn(2+). Position 414 (H414) interacts with Zn(2+).

The protein belongs to the histidinol dehydrogenase family. The cofactor is Zn(2+).

It catalyses the reaction L-histidinol + 2 NAD(+) + H2O = L-histidine + 2 NADH + 3 H(+). Its pathway is amino-acid biosynthesis; L-histidine biosynthesis; L-histidine from 5-phospho-alpha-D-ribose 1-diphosphate: step 9/9. In terms of biological role, catalyzes the sequential NAD-dependent oxidations of L-histidinol to L-histidinaldehyde and then to L-histidine. This chain is Histidinol dehydrogenase, found in Bacillus licheniformis (strain ATCC 14580 / DSM 13 / JCM 2505 / CCUG 7422 / NBRC 12200 / NCIMB 9375 / NCTC 10341 / NRRL NRS-1264 / Gibson 46).